A 150-amino-acid chain; its full sequence is Dual specificity protein phosphatase 23 (150 aa).

The region spanning 7–150 (NFSWVLPGRL…AVFQFYQRTK (144 aa)) is the Tyrosine-protein phosphatase domain. The Phosphocysteine intermediate role is filled by C95.

Belongs to the protein-tyrosine phosphatase family. Non-receptor class dual specificity subfamily. Widely expressed. Highly expressed in spleen, prostate, colon, adrenal gland, mammary gland, thyroid and trachea. Expressed at lower level in uterus, small intestine, bladder, bone marrow, brain, spinal cord and stomach.

The protein localises to the cytoplasm. The protein resides in the cytosol. It is found in the nucleus. The catalysed reaction is O-phospho-L-tyrosyl-[protein] + H2O = L-tyrosyl-[protein] + phosphate. It catalyses the reaction O-phospho-L-seryl-[protein] + H2O = L-seryl-[protein] + phosphate. It carries out the reaction O-phospho-L-threonyl-[protein] + H2O = L-threonyl-[protein] + phosphate. Functionally, protein phosphatase that mediates dephosphorylation of proteins phosphorylated on Tyr and Ser/Thr residues. In vitro, it can dephosphorylate p44-ERK1 (MAPK3) but not p54 SAPK-beta (MAPK10) in vitro. Able to enhance activation of JNK and p38 (MAPK14). The sequence is that of Dual specificity protein phosphatase 23 (DUSP23) from Homo sapiens (Human).